An 855-amino-acid chain; its full sequence is MDLYCQKCYKQLELDDSLLDIDQSLFLKTNIHEIIEELEELSLKPVPKERETLILKQQQQQLLQQQEQAAAAAAIQSPQTVSKMSKLKSGLFGKRKELTQSNSTTPTTPATPTATPTSSSLSLPTPPPLPQQQQQQQQQQQQTFNDQSKLTATTPTQPTPIEEKKQQSFKTFYPAAHSNNSSNGSDHGGNVNTTGVSPSSPGGGAHSFGSLSQHRLSSSLSLKSISSGGGNSSSNLVADINNNNNSVNKDNNTTISSSTVTTSNSISESNNQDSKLLVATTTTTTTTTTTTILATIPTTTTTSTPTTPSTVGGTTPSPPSSSSSSSSSSSVITSPISRISPSNITSPSKLSQQSTPRQRPLTIAPTKLNISQVSSPQKPRLKYLRTSSKSLSMASLPAVGPDGTIIVDGGASSGTESTSMTNHHSSFLNQSTLPLGSSPVQTTPPLLSNSMNNSTNNLQSLQQQQQQQQQQQQQPISENNYYKYMKGLSLFKIATDLINYDLPLCLECTKLTIGELEDEGSILDGEVSIYSAYLKQLEKGKTEEDLEELGKEMTLLCEEEEQLRLMIENTHQERKEVEQLTLQLQDRIATLKSLEDSYWSCFSEFHYETFRNKDERDQTTVQIQWVNDHLESLKQTNILNDAFHLWHDGHFGTINSLRLGKLPSQPVEWNEINAAWGLAVSLLDAMAKKLKFKFQQFTLVPNGSCSRVDKRDVDPPLAYELYGTNDISLGRLFWYRRFDNGMIAFLQCIKELCEHITEKDPEFSVPYKIDKEYIGGMCIKLQFTNDDTWTKSLKFMLTNLKWILIWIVKNETLTLFNNQQFQQSKLNNNQNNNNINNNNNNNINNNNNNNVNKRN.

4 disordered regions span residues 92–212 (FGKR…GSLS), 236–271 (LVADINNNNNSVNKDNNTTISSSTVTTSNSISESNN), 294–380 (ATIP…QKPR), and 407–475 (VDGG…QQQP). Composition is skewed to low complexity over residues 99 to 123 (TQSNSTTPTTPATPTATPTSSSLSL) and 131 to 143 (QQQQQQQQQQQQT). The segment covering 144 to 156 (FNDQSKLTATTPT) has biased composition (polar residues). Low complexity predominate over residues 177-200 (HSNNSSNGSDHGGNVNTTGVSPSS). Positions 294–348 (ATIPTTTTTSTPTTPSTVGGTTPSPPSSSSSSSSSSSVITSPISRISPSNITSPS) are enriched in low complexity. Composition is skewed to polar residues over residues 368–377 (LNISQVSSPQ) and 413–445 (SGTESTSMTNHHSSFLNQSTLPLGSSPVQTTPP). Residues 446 to 474 (LLSNSMNNSTNNLQSLQQQQQQQQQQQQQ) are compositionally biased toward low complexity. Positions 538-595 (EKGKTEEDLEELGKEMTLLCEEEEQLRLMIENTHQERKEVEQLTLQLQDRIATLKSLE) form a coiled coil. The segment at 826–855 (LNNNQNNNNINNNNNNNINNNNNNNVNKRN) is disordered.

It belongs to the beclin family.

It localises to the endosome membrane. In terms of biological role, involved in autophagy. May be required to recruit the atg8-phosphatidylinositol conjugate and the atg12-atg5 conjugate to the pre-autophagosomal structure. The chain is Beclin-1-like protein B (atg6B) from Dictyostelium discoideum (Social amoeba).